Here is a 185-residue protein sequence, read N- to C-terminus: Large ribosomal subunit protein uL6 (185 aa).

This sequence belongs to the universal ribosomal protein uL6 family. In terms of assembly, part of the 50S ribosomal subunit.

This protein binds to the 23S rRNA, and is important in its secondary structure. It is located near the subunit interface in the base of the L7/L12 stalk, and near the tRNA binding site of the peptidyltransferase center. In Deinococcus deserti (strain DSM 17065 / CIP 109153 / LMG 22923 / VCD115), this protein is Large ribosomal subunit protein uL6.